A 294-amino-acid polypeptide reads, in one-letter code: Cytidine deaminase (294 aa).

CMP/dCMP-type deaminase domains lie at 49-169 (TPQQ…FGPA) and 188-294 (ETQD…YIAL). Residue 90 to 92 (NLE) coordinates substrate. Zn(2+) is bound at residue His-103. The active-site Proton donor is the Glu-105. Residues Cys-130 and Cys-133 each coordinate Zn(2+).

This sequence belongs to the cytidine and deoxycytidylate deaminase family. As to quaternary structure, homodimer. Requires Zn(2+) as cofactor.

It catalyses the reaction cytidine + H2O + H(+) = uridine + NH4(+). It carries out the reaction 2'-deoxycytidine + H2O + H(+) = 2'-deoxyuridine + NH4(+). Functionally, this enzyme scavenges exogenous and endogenous cytidine and 2'-deoxycytidine for UMP synthesis. This Pasteurella multocida (strain Pm70) protein is Cytidine deaminase.